The sequence spans 625 residues: Replication protein E1 (625 aa).

The Nuclear localization signal motif lies at 83–85; it reads KRK. Phosphoserine; by host is present on residues S89, S93, and S107. A Nuclear export signal motif is present at residues 106–115; that stretch reads LSPRLNEISL. The interval 147–169 is disordered; it reads GGGGQDVQAGGKENTRPDDGGGD. Residues 162–328 are DNA-binding region; the sequence is RPDDGGGDAT…QTMFQHGLED (167 aa). An SF3 helicase domain is found at 427 to 577; the sequence is VEFIAFLAAL…FPFDQNGNPV (151 aa). Residue 453–460 coordinates ATP; sequence GPPNTGKS. K534 is covalently cross-linked (Glycyl lysine isopeptide (Lys-Gly) (interchain with G-Cter in SUMO)).

The protein belongs to the papillomaviridae E1 protein family. In terms of assembly, can form hexamers. Interacts with E2 protein; this interaction increases E1 DNA binding specificity. Interacts with host DNA polymerase subunit POLA2. Interacts with host single stranded DNA-binding protein RPA1. Interacts with host TOP1; this interaction stimulates the enzymatic activity of TOP1. Phosphorylated. Post-translationally, sumoylated.

It localises to the host nucleus. It catalyses the reaction Couples ATP hydrolysis with the unwinding of duplex DNA by translocating in the 3'-5' direction.. The catalysed reaction is ATP + H2O = ADP + phosphate + H(+). ATP-dependent DNA 3'-5' helicase required for initiation of viral DNA replication. It forms a complex with the viral E2 protein. The E1-E2 complex binds to the replication origin which contains binding sites for both proteins. During the initial step, a dimer of E1 interacts with a dimer of protein E2 leading to a complex that binds the viral origin of replication with high specificity. Then, a second dimer of E1 displaces the E2 dimer in an ATP-dependent manner to form the E1 tetramer. Following this, two E1 monomers are added to each half of the site, which results in the formation of two E1 trimers on the viral ori. Subsequently, two hexamers will be created. The double hexamer acts as a bi-directional helicase machinery and unwinds the viral DNA and then recruits the host DNA polymerase to start replication. This chain is Replication protein E1, found in Macaca mulatta (Rhesus macaque).